Here is a 307-residue protein sequence, read N- to C-terminus: Protein EI24 homolog (307 aa).

A run of 2 helical transmembrane segments spans residues 53–73 (FIHC…IYLY) and 92–112 (MFTI…SIIA). N135 carries an N-linked (GlcNAc...) asparagine glycan. The next 4 helical transmembrane spans lie at 153–173 (LFGV…TNFI), 175–195 (FVII…ILRG), 225–245 (FFFP…LFII), and 260–280 (GILP…NVIL).

It belongs to the EI24 family.

The protein localises to the membrane. This chain is Protein EI24 homolog, found in Dictyostelium discoideum (Social amoeba).